The primary structure comprises 438 residues: Probable inactive protein kinase 38 (438 aa).

The 264-residue stretch at 77-340 (PRFRLALGKG…FTELQPQYFL (264 aa)) folds into the Protein kinase domain.

This sequence belongs to the protein kinase superfamily. Tyr protein kinase family.

The protein is Probable inactive protein kinase 38 (36) of Equus caballus (Horse).